Consider the following 554-residue polypeptide: Developmental and secondary metabolism regulator ve-1 (554 aa).

Positions 31–230 constitute a Velvet domain; that stretch reads GRKLWYSLRV…AEQGCRVRIR (200 aa). Residues 45–50 carry the Nuclear localization signal motif; sequence LRARAC. The segment covering 166 to 175 has biased composition (basic and acidic residues); that stretch reads TKEDKDKDPE. 3 disordered regions span residues 166–190, 232–430, and 465–528; these read TKEDKDKDPEEPNAPPDGSPGSFDF, DVRM…PHRL, and PRAY…VDDK. Polar residues predominate over residues 276-292; sequence RSMSGSTERTPYSSISD. 2 stretches are compositionally biased toward pro residues: residues 363–372 and 485–494; these read SYPPPPPPHQ and LPPPPPPPPQ. The tract at residues 455 to 487 is PEST; that stretch reads SPSNMAAPPYPRAYSVSNSGGLTSAGGYNQLPP. The segment covering 500 to 528 has biased composition (basic and acidic residues); that stretch reads RAHDQTFRADPEMRRYQDGARERESVDDK.

This sequence belongs to the velvet family. VeA subfamily. Component of the heterotrimeric velvet complex composed of lae-1, ve-1 and vel-2; Ve-1 acting as a bridging protein between lae-1 and vel-2.

Its subcellular location is the nucleus. It localises to the cytoplasm. Its function is as follows. Component of the velvet transcription factor complex that controls sexual/asexual developmental ratio in response to light, promoting sexual development in the darkness while stimulating asexual sporulation under illumination. The velvet complex hat acts as a global regulator for secondary metabolite gene expression. This Neurospora crassa (strain ATCC 24698 / 74-OR23-1A / CBS 708.71 / DSM 1257 / FGSC 987) protein is Developmental and secondary metabolism regulator ve-1.